We begin with the raw amino-acid sequence, 287 residues long: Nucleotide-binding protein GM21_3387 (287 aa).

8-15 (GLSGSGKS) contributes to the ATP binding site. A GTP-binding site is contributed by 59–62 (DIRS).

It belongs to the RapZ-like family.

Displays ATPase and GTPase activities. This chain is Nucleotide-binding protein GM21_3387, found in Geobacter sp. (strain M21).